We begin with the raw amino-acid sequence, 250 residues long: 26 kDa periplasmic immunogenic protein (250 aa).

An N-terminal signal peptide occupies residues 1–28; sequence MNTRASNFLAASFSTIMLVGAFSLPAFA.

Its subcellular location is the periplasm. The polypeptide is 26 kDa periplasmic immunogenic protein (bp26) (Brucella abortus (strain S19)).